Here is a 93-residue protein sequence, read N- to C-terminus: Putative defensin-like protein 282 (93 aa).

The signal sequence occupies residues methionine 1–glycine 25. Intrachain disulfides connect cysteine 51–cysteine 83, cysteine 66–cysteine 90, and cysteine 72–cysteine 92.

Belongs to the DEFL family.

It localises to the secreted. This chain is Putative defensin-like protein 282, found in Arabidopsis thaliana (Mouse-ear cress).